Consider the following 921-residue polypeptide: TRPM8 channel-associated factor 1 (921 aa).

Residues Tyr-542–Gly-841 enclose the Peptidase M60 domain.

The protein belongs to the TCAF family. As to quaternary structure, interacts with TRPM8 (via N-terminus and C-terminus domains); the interaction inhibits TRPM8 channel activity. Interacts with TRPV6.

It is found in the cell membrane. In terms of biological role, positively regulates the plasma membrane cation channel TRPM8 activity. Involved in the recruitment of TRPM8 to the cell surface. Promotes prostate cancer cell migration inhibition in a TRPM8-dependent manner. This Pongo abelii (Sumatran orangutan) protein is TRPM8 channel-associated factor 1.